The sequence spans 508 residues: Pyruvate kinase (508 aa).

Arg56 contacts substrate. 4 residues coordinate K(+): Asn58, Ser60, Asp90, and Thr91. 58–61 (NFSH) contributes to the ATP binding site. 2 residues coordinate ATP: Arg97 and Lys185. Residue Glu251 participates in Mg(2+) binding. Substrate is bound by residues Gly274, Asp275, and Thr307. Residue Asp275 participates in Mg(2+) binding.

The protein belongs to the pyruvate kinase family. In terms of assembly, homotetramer. Requires Mg(2+) as cofactor. The cofactor is K(+).

The catalysed reaction is pyruvate + ATP = phosphoenolpyruvate + ADP + H(+). The protein operates within carbohydrate degradation; glycolysis; pyruvate from D-glyceraldehyde 3-phosphate: step 5/5. Regulated by phosphoenolpyruvate substrate and is allosterically activated by ribose-5-phosphate, AMP and other nucleoside monophosphates but not by fructose-1,6-bisphosphate. This chain is Pyruvate kinase (pyk), found in Mycoplasma genitalium (strain ATCC 33530 / DSM 19775 / NCTC 10195 / G37) (Mycoplasmoides genitalium).